We begin with the raw amino-acid sequence, 447 residues long: UPF0210 protein LSEI_0897 (447 aa).

This sequence belongs to the UPF0210 family. Homodimer.

The chain is UPF0210 protein LSEI_0897 from Lacticaseibacillus paracasei (strain ATCC 334 / BCRC 17002 / CCUG 31169 / CIP 107868 / KCTC 3260 / NRRL B-441) (Lactobacillus paracasei).